The sequence spans 336 residues: SCP domain-containing protein 1 (336 aa).

The first 18 residues, 1–18, serve as a signal peptide directing secretion; that stretch reads MEFKLLLVLCFNIGLICS. N-linked (GlcNAc...) asparagine glycosylation is present at asparagine 47. Residues 73–85 are compositionally biased toward polar residues; the sequence is QGGNTAPSSSLPG. Residues 73 to 94 form a disordered region; that stretch reads QGGNTAPSSSLPGVSSMPMPSA. The SCP domain maps to 175–292; that stretch reads LEEHNKFRSD…YCGDMSFIAC (118 aa). Asparagine 213 and asparagine 257 each carry an N-linked (GlcNAc...) asparagine glycan.

As to expression, component of the acid-insoluble and acid-soluble organic matrix of calcified layers of the shell (at protein level).

The protein resides in the secreted. The polypeptide is SCP domain-containing protein 1 (Lottia gigantea (Giant owl limpet)).